A 699-amino-acid chain; its full sequence is MTNPIVASQPQMAQQGIRRLLILSGQADWSRQQAIMLRQHLAGDWLWLSEQPPEGVNSISPTAARTLLGQENLHGVFDATDGLNIEALAIVAGTLRAGSWLLLLVPEWDDWPQRPDKDSLRWSEQPAPIVTANFIRHLQRQFLADPDVVLWQQDRPLILPAVGSRPCWQQPDGSPTAQQQHILQRLMQADSGIWVLTAARGRGKSTLAGMLVTHWQGACWVTGPGKAATQVLNQQAGERARFWAPDALLDYCQRHDVSDIDWLLIDEAAAIPTPLLSALLAYFPRALLTTTVQGYEGTGRGFLLKFCATLGDWHHLTLTDPIRWATDDPLERVMDNAMLFHDELLGNHPLPKRPPVAQIEIPLYEQRDWRDNPELLRRFYGLLSTAHYRTTPLDLRRLMDAPGMHFSAARVADAVIGALWLVDEGGLSEALALDVWAGRRRPRGNLVAQSLAAHSGQWQAPTLLSRRISRVAVTAAWRQQGIARRMIAAEQAHARQQQCDFLSVSFGYTAELAHFWHRCGFRLVRIGSHKEASSGCYTAMALLPLSPAGEALCQAAQQQLKRDWYWLQQWIGIPTPVFLRLPEPPEVTLTDDDWRELAGFAFAFRPLEASLPALQRLLLHTELPLSALRHYLQLRTPQSEIINTLGLIGRKALVALWRQEAAEGMAMIDVDKMIMSAKPSARCSTVRLPGRKNLTICQC.

Residues glutamine 179, 201 to 210, and arginine 323 contribute to the ATP site; that span reads GRGKSTLAGM. The N-acetyltransferase domain maps to 359–543; that stretch reads IEIPLYEQRD…SGCYTAMALL (185 aa). Acetyl-CoA is bound by residues 471–473, glutamate 511, and arginine 518; that span reads VAV.

It belongs to the RNA cytidine acetyltransferase family. TmcA subfamily.

It localises to the cytoplasm. The catalysed reaction is cytidine(34) in elongator tRNA(Met) + acetyl-CoA + ATP + H2O = N(4)-acetylcytidine(34) in elongator tRNA(Met) + ADP + phosphate + CoA + H(+). Catalyzes the formation of N(4)-acetylcytidine (ac(4)C) at the wobble position of tRNA(Met), by using acetyl-CoA as an acetyl donor and ATP (or GTP). The protein is tRNA(Met) cytidine acetyltransferase TmcA of Yersinia pestis (strain D106004).